Consider the following 134-residue polypeptide: ATP synthase epsilon chain (134 aa).

It belongs to the ATPase epsilon chain family. F-type ATPases have 2 components, CF(1) - the catalytic core - and CF(0) - the membrane proton channel. CF(1) has five subunits: alpha(3), beta(3), gamma(1), delta(1), epsilon(1). CF(0) has three main subunits: a, b and c.

It localises to the cell membrane. Functionally, produces ATP from ADP in the presence of a proton gradient across the membrane. The chain is ATP synthase epsilon chain from Ruminococcus albus (strain ATCC 27210 / DSM 20455 / JCM 14654 / NCDO 2250 / 7).